A 119-amino-acid polypeptide reads, in one-letter code: Large ribosomal subunit protein bL20 (119 aa).

Belongs to the bacterial ribosomal protein bL20 family.

In terms of biological role, binds directly to 23S ribosomal RNA and is necessary for the in vitro assembly process of the 50S ribosomal subunit. It is not involved in the protein synthesizing functions of that subunit. In Shewanella amazonensis (strain ATCC BAA-1098 / SB2B), this protein is Large ribosomal subunit protein bL20.